The primary structure comprises 225 residues: DNA-binding response regulator MtrA (225 aa).

The 114-residue stretch at 4–117 folds into the Response regulatory domain; the sequence is RILVVDDDAS…ELVARVRARL (114 aa). At Asp53 the chain carries 4-aspartylphosphate. Residues 125-224 constitute a DNA-binding region (ompR/PhoB-type); that stretch reads AEMLSIADVE…VRGVGYKAGP (100 aa).

Phosphorylated by MtrB.

In terms of biological role, member of the two-component regulatory system MtrA/MtrB. This is DNA-binding response regulator MtrA (mtrA) from Mycolicibacterium paratuberculosis (strain ATCC BAA-968 / K-10) (Mycobacterium paratuberculosis).